The sequence spans 492 residues: 3-octaprenyl-4-hydroxybenzoate carboxy-lyase (492 aa).

A Mn(2+)-binding site is contributed by Asn-175. Prenylated FMN-binding positions include 178–180 (IYR), 192–194 (RWL), and 197–198 (RG). Residue Glu-241 participates in Mn(2+) binding. Asp-290 acts as the Proton donor in catalysis.

The protein belongs to the UbiD family. As to quaternary structure, homohexamer. The cofactor is prenylated FMN. Mn(2+) serves as cofactor.

It localises to the cell membrane. The enzyme catalyses a 4-hydroxy-3-(all-trans-polyprenyl)benzoate + H(+) = a 2-(all-trans-polyprenyl)phenol + CO2. It functions in the pathway cofactor biosynthesis; ubiquinone biosynthesis. In terms of biological role, catalyzes the decarboxylation of 3-octaprenyl-4-hydroxy benzoate to 2-octaprenylphenol, an intermediate step in ubiquinone biosynthesis. In Salmonella paratyphi A (strain ATCC 9150 / SARB42), this protein is 3-octaprenyl-4-hydroxybenzoate carboxy-lyase.